The following is a 312-amino-acid chain: Glycerol-3-phosphate dehydrogenase [NAD(P)+] (312 aa).

W11, R30, R31, and K95 together coordinate NADPH. Sn-glycerol 3-phosphate is bound by residues K95, G123, and S125. An NADPH-binding site is contributed by A127. K177, D230, S240, R241, and N242 together coordinate sn-glycerol 3-phosphate. The active-site Proton acceptor is K177. Position 241 (R241) interacts with NADPH. Residues V265 and E267 each contribute to the NADPH site.

Belongs to the NAD-dependent glycerol-3-phosphate dehydrogenase family.

The protein localises to the cytoplasm. The enzyme catalyses sn-glycerol 3-phosphate + NAD(+) = dihydroxyacetone phosphate + NADH + H(+). It catalyses the reaction sn-glycerol 3-phosphate + NADP(+) = dihydroxyacetone phosphate + NADPH + H(+). The protein operates within membrane lipid metabolism; glycerophospholipid metabolism. In terms of biological role, catalyzes the reduction of the glycolytic intermediate dihydroxyacetone phosphate (DHAP) to sn-glycerol 3-phosphate (G3P), the key precursor for phospholipid synthesis. In Helicobacter pylori (strain HPAG1), this protein is Glycerol-3-phosphate dehydrogenase [NAD(P)+].